The sequence spans 177 residues: MSIEVSNESGIDVSEAELISVARFVIAKMDVNPAAELSMVLLDTAAMADLHMRWMDLPGPTDVMSFPMDELEPGGRPDAPEPGPAMLGDIVLCPEFAADQAAAAGHSLGHELALLTIHGVLHLLGYDHGEPDEEKEMFALQDRLLEEWVADQVEAYHQDRQQERDRRLLDKSRYFDH.

His-118, His-122, and His-128 together coordinate Zn(2+).

This sequence belongs to the endoribonuclease YbeY family. The cofactor is Zn(2+).

The protein localises to the cytoplasm. Single strand-specific metallo-endoribonuclease involved in late-stage 70S ribosome quality control and in maturation of the 3' terminus of the 16S rRNA. The chain is Endoribonuclease YbeY from Mycolicibacterium paratuberculosis (strain ATCC BAA-968 / K-10) (Mycobacterium paratuberculosis).